The chain runs to 134 residues: Cytochrome c-type biogenesis protein CcmE (134 aa).

Residues 1 to 7 (MKRKYRR) lie on the Cytoplasmic side of the membrane. Residues 8 to 28 (LFVVIITLSIFAGSVVLVLGK) traverse the membrane as a helical; Signal-anchor for type II membrane protein segment. At 29–134 (LKNNVSFFYT…MPNKYKTNDL (106 aa)) the chain is on the periplasmic side. Residues His-120 and Tyr-124 each contribute to the heme site.

The protein belongs to the CcmE/CycJ family.

The protein localises to the cell inner membrane. Its function is as follows. Heme chaperone required for the biogenesis of c-type cytochromes. Transiently binds heme delivered by CcmC and transfers the heme to apo-cytochromes in a process facilitated by CcmF and CcmH. This Ehrlichia ruminantium (strain Welgevonden) protein is Cytochrome c-type biogenesis protein CcmE.